A 557-amino-acid polypeptide reads, in one-letter code: Potassium-transporting ATPase potassium-binding subunit (557 aa).

Helical transmembrane passes span 1–21 (MEILQIAIILIVFVLLCIPIG), 62–82 (QYIFALLMCNAVPAIIGYIIL), 132–152 (IVITFFMFFAAATGIAVALAF), 176–196 (ILLPLSIIVAIFYIGQGVPQT), 253–273 (VQIITLLLLAGSMVVCFGHMI), 279–299 (AVAIFAAMMVLLLAGAAICFS), 371–391 (IFGGVGVGFMNMIMYAILTVF), 415–435 (LVAFAIIVHPFLILMSSALAL), 482–502 (VSAGVVMFLGRYLSIIILLAV), and 528–548 (VTLIVIIVIIGALTFLPAVAL).

This sequence belongs to the KdpA family. In terms of assembly, the system is composed of three essential subunits: KdpA, KdpB and KdpC.

Its subcellular location is the cell membrane. In terms of biological role, part of the high-affinity ATP-driven potassium transport (or Kdp) system, which catalyzes the hydrolysis of ATP coupled with the electrogenic transport of potassium into the cytoplasm. This subunit binds the extracellular potassium ions and delivers the ions to the membrane domain of KdpB through an intramembrane tunnel. The polypeptide is Potassium-transporting ATPase potassium-binding subunit (Clostridium acetobutylicum (strain ATCC 824 / DSM 792 / JCM 1419 / IAM 19013 / LMG 5710 / NBRC 13948 / NRRL B-527 / VKM B-1787 / 2291 / W)).